We begin with the raw amino-acid sequence, 221 residues long: Stromal cell-derived factor 2-like protein 1 (221 aa).

Residues 1 to 28 form the signal peptide; it reads MWSAGRGGAAWPVLLGLLLALLVPGGGA. MIR domains lie at 33–87, 95–150, and 151–205; these read AELV…IRGG, GSPV…VRCS, and GQHW…AMEG. Ser215 carries the phosphoserine modification. A Prevents secretion from ER motif is present at residues 218 to 221; it reads HDEL.

In terms of assembly, part of a large chaperone multiprotein complex comprising CABP1, DNAJB11, HSP90B1, HSPA5, HYOU, PDIA2, PDIA4, PPIB, SDF2L1, UGGT1 and very small amounts of ERP29, but not, or at very low levels, CALR nor CANX. Ubiquitously expressed with high expression in testis, moderate expression in the pancreas, spleen, prostate, small intestine and colon. Very low expression is seen in brain and skeletal muscle.

The protein resides in the endoplasmic reticulum lumen. This Homo sapiens (Human) protein is Stromal cell-derived factor 2-like protein 1 (SDF2L1).